Consider the following 141-residue polypeptide: Ribosome-binding factor A (141 aa).

A disordered region spans residues 120 to 141 (DEALRAQSAGARPAGDEDPYKP).

Belongs to the RbfA family. Monomer. Binds 30S ribosomal subunits, but not 50S ribosomal subunits or 70S ribosomes.

The protein localises to the cytoplasm. One of several proteins that assist in the late maturation steps of the functional core of the 30S ribosomal subunit. Associates with free 30S ribosomal subunits (but not with 30S subunits that are part of 70S ribosomes or polysomes). Required for efficient processing of 16S rRNA. May interact with the 5'-terminal helix region of 16S rRNA. The protein is Ribosome-binding factor A of Corynebacterium jeikeium (strain K411).